Reading from the N-terminus, the 434-residue chain is V-type ATP synthase beta chain (434 aa).

It belongs to the ATPase alpha/beta chains family.

Its function is as follows. Produces ATP from ADP in the presence of a proton gradient across the membrane. The V-type beta chain is a regulatory subunit. The protein is V-type ATP synthase beta chain (atpB) of Borreliella burgdorferi (strain ATCC 35210 / DSM 4680 / CIP 102532 / B31) (Borrelia burgdorferi).